A 281-amino-acid chain; its full sequence is Bifunctional protein FolD (281 aa).

NADP(+) is bound by residues 167–169 (GRS) and Ser-192.

Belongs to the tetrahydrofolate dehydrogenase/cyclohydrolase family. As to quaternary structure, homodimer.

The catalysed reaction is (6R)-5,10-methylene-5,6,7,8-tetrahydrofolate + NADP(+) = (6R)-5,10-methenyltetrahydrofolate + NADPH. It catalyses the reaction (6R)-5,10-methenyltetrahydrofolate + H2O = (6R)-10-formyltetrahydrofolate + H(+). Its pathway is one-carbon metabolism; tetrahydrofolate interconversion. Functionally, catalyzes the oxidation of 5,10-methylenetetrahydrofolate to 5,10-methenyltetrahydrofolate and then the hydrolysis of 5,10-methenyltetrahydrofolate to 10-formyltetrahydrofolate. The protein is Bifunctional protein FolD of Alcanivorax borkumensis (strain ATCC 700651 / DSM 11573 / NCIMB 13689 / SK2).